We begin with the raw amino-acid sequence, 1157 residues long: Endo-1,4-beta-xylanase A (1157 aa).

Residues 1–33 form the signal peptide; the sequence is MMKNNVDRIVSIVTALIMIFGASLFSPPIRVFA. CBM-cenC domains lie at 38 to 189 and 195 to 343; these read INLV…VTTQ and GNVI…VIGE. The GH10 domain maps to 352 to 675; the sequence is QNDIPDLYSV…KPAFWAVVDP (324 aa). The active-site Proton donor is glutamate 495. Aspartate 537 is an active-site residue. Residue glutamate 600 is the Nucleophile of the active site. 2 consecutive SLH domains span residues 1051–1114 and 1115–1157; these read KKGV…YSGE and FSDV…EMTQ.

It belongs to the glycosyl hydrolase 10 (cellulase F) family.

It catalyses the reaction Endohydrolysis of (1-&gt;4)-beta-D-xylosidic linkages in xylans.. It functions in the pathway glycan degradation; xylan degradation. In terms of biological role, endo-acting enzyme that randomly cleaves the internal xylosidic linkages of the xylan backbone, yielding xylooligosaccharides of various lengths which are further hydrolyzed to xylose molecules by beta-xylosidase (EC 3.2.1.37). Requires at least three xylose residues for catalytic activity. Does not have activity against xylobiose. This chain is Endo-1,4-beta-xylanase A (xynA), found in Thermoanaerobacterium saccharolyticum.